The primary structure comprises 293 residues: Elongation factor Ts (293 aa).

The tract at residues 79-82 (TDFV) is involved in Mg(2+) ion dislocation from EF-Tu.

This sequence belongs to the EF-Ts family.

It is found in the cytoplasm. Functionally, associates with the EF-Tu.GDP complex and induces the exchange of GDP to GTP. It remains bound to the aminoacyl-tRNA.EF-Tu.GTP complex up to the GTP hydrolysis stage on the ribosome. The polypeptide is Elongation factor Ts (tsf) (Halalkalibacterium halodurans (strain ATCC BAA-125 / DSM 18197 / FERM 7344 / JCM 9153 / C-125) (Bacillus halodurans)).